Consider the following 176-residue polypeptide: Ribosome maturation factor RimM (176 aa).

The region spanning Ala-99 to Leu-173 is the PRC barrel domain.

Belongs to the RimM family. Binds ribosomal protein uS19.

The protein resides in the cytoplasm. In terms of biological role, an accessory protein needed during the final step in the assembly of 30S ribosomal subunit, possibly for assembly of the head region. Essential for efficient processing of 16S rRNA. May be needed both before and after RbfA during the maturation of 16S rRNA. It has affinity for free ribosomal 30S subunits but not for 70S ribosomes. The polypeptide is Ribosome maturation factor RimM (Trichlorobacter lovleyi (strain ATCC BAA-1151 / DSM 17278 / SZ) (Geobacter lovleyi)).